Here is a 270-residue protein sequence, read N- to C-terminus: Nuclear receptor-interacting protein 2 (270 aa).

A compositionally biased stretch (basic and acidic residues) spans 1-27 (MSTGQEARRDEGDSRKEQEASLRDRAH). The disordered stretch occupies residues 1–33 (MSTGQEARRDEGDSRKEQEASLRDRAHLSQQRQ). Positions 61 to 99 (KDLQPHSVIQRRLVEGNQRRLQGESPLLQALIRGHDSSR) are interaction with NR1F2. Residues 192–196 (LQTLL) carry the LXXLL motif motif.

In terms of assembly, interacts with NR1F2, RARA and THRB in a ligand-dependent manner. As to expression, expression is restricted to the central nervous system (neurons in the dentate gyrus of the hippocampus, the amygdala, thalamic and hypothalamic regions).

It localises to the nucleus. In terms of biological role, down-regulates transcriptional activation by nuclear receptors, such as NR1F2. This Mus musculus (Mouse) protein is Nuclear receptor-interacting protein 2 (Nrip2).